Reading from the N-terminus, the 1028-residue chain is Unconventional myosin-Ic (1028 aa).

Met1 is subject to N-acetylmethionine. The 685-residue stretch at 12 to 696 (GVQDFVLLEN…TLFATEDALE (685 aa)) folds into the Myosin motor domain. ATP contacts are provided by residues Asn53, Tyr61, 104–113 (SGESGAGKTE), and 157–161 (NDNSS). Lys348 bears the N6-methyllysine mark. An actin-binding region spans residues 573–595 (LSKLMEILMSKEPSYIRCIKPND). 2 consecutive IQ domains span residues 699–728 (KQSL…SAIA) and 722–751 (MKHS…AVQT). The TH1 domain maps to 850–1024 (KDNYPQSVPR…NGHLTVVAPR (175 aa)).

The protein belongs to the TRAFAC class myosin-kinesin ATPase superfamily. Myosin family. In terms of assembly, interacts (via its IQ motifs) with CALM.

It is found in the cytoplasm. It localises to the cell cortex. Its subcellular location is the cell projection. The protein localises to the ruffle membrane. The protein resides in the cytoplasmic vesicle. It is found in the stereocilium membrane. In terms of biological role, myosins are actin-based motor molecules with ATPase activity. Unconventional myosins serve in intracellular movements. Their highly divergent tails are presumed to bind to membranous compartments, which would be moved relative to actin filaments. The sequence is that of Unconventional myosin-Ic (MYO1C) from Gallus gallus (Chicken).